The following is a 407-amino-acid chain: MRQLLPGDTVWRNIRLATMDPQRQAPYGLVDNQALIVRGGHICDIVPETQLPVSGDNIHDMQGRLVTPGLIDCHTHLVFAGNRAAEWEQRLNGASYQHISAQGGGINATVSATRACAEETLYLLARERMMRLASEGVTLLEIKSGYGLELATEEKLLRVAAKLAAENAIDISPTLLAAHATPAEYRDDPDGYITLVCETMIPQLWQKGLFDAVDLFCESVGFNVAQSERVLQTAKALGIPVKGHVEQLSLLGGAQLVSRYQGLSADHIEYLDEAGVAAMRDGGTVGVLLPGAFYFLRETQRPPVELLRRYQVPVAVASDFNPGTSPFCSLHLAMNMACVQFGLTPEEAWAGVTRHAARALGRQATHGQIRAGYRADFVVWDAEQPVEIVYEPGRNPLYQRVYRGKIS.

Residues His-74 and His-76 each contribute to the Fe(3+) site. His-74 and His-76 together coordinate Zn(2+). 3 residues coordinate 4-imidazolone-5-propanoate: Arg-83, Tyr-146, and His-179. Residue Tyr-146 coordinates N-formimidoyl-L-glutamate. A Fe(3+)-binding site is contributed by His-244. His-244 contributes to the Zn(2+) binding site. Gln-247 contributes to the 4-imidazolone-5-propanoate binding site. Fe(3+) is bound at residue Asp-319. Asp-319 contributes to the Zn(2+) binding site. 2 residues coordinate N-formimidoyl-L-glutamate: Asn-321 and Gly-323. Thr-324 is a binding site for 4-imidazolone-5-propanoate.

This sequence belongs to the metallo-dependent hydrolases superfamily. HutI family. The cofactor is Zn(2+). Requires Fe(3+) as cofactor.

Its subcellular location is the cytoplasm. It carries out the reaction 4-imidazolone-5-propanoate + H2O = N-formimidoyl-L-glutamate. It functions in the pathway amino-acid degradation; L-histidine degradation into L-glutamate; N-formimidoyl-L-glutamate from L-histidine: step 3/3. Functionally, catalyzes the hydrolytic cleavage of the carbon-nitrogen bond in imidazolone-5-propanoate to yield N-formimidoyl-L-glutamate. It is the third step in the universal histidine degradation pathway. This chain is Imidazolonepropionase, found in Salmonella schwarzengrund (strain CVM19633).